We begin with the raw amino-acid sequence, 120 residues long: NAD(P)H-quinone oxidoreductase subunit 3, chloroplastic (120 aa).

3 helical membrane passes run 9 to 29 (IFWA…LISG), 64 to 84 (MFAL…PWAV), and 88 to 108 (ILGV…VVGS).

Belongs to the complex I subunit 3 family. As to quaternary structure, NDH is composed of at least 16 different subunits, 5 of which are encoded in the nucleus.

It localises to the plastid. It is found in the chloroplast thylakoid membrane. The enzyme catalyses a plastoquinone + NADH + (n+1) H(+)(in) = a plastoquinol + NAD(+) + n H(+)(out). It catalyses the reaction a plastoquinone + NADPH + (n+1) H(+)(in) = a plastoquinol + NADP(+) + n H(+)(out). In terms of biological role, NDH shuttles electrons from NAD(P)H:plastoquinone, via FMN and iron-sulfur (Fe-S) centers, to quinones in the photosynthetic chain and possibly in a chloroplast respiratory chain. The immediate electron acceptor for the enzyme in this species is believed to be plastoquinone. Couples the redox reaction to proton translocation, and thus conserves the redox energy in a proton gradient. The chain is NAD(P)H-quinone oxidoreductase subunit 3, chloroplastic from Nymphaea alba (White water-lily).